A 319-amino-acid polypeptide reads, in one-letter code: Large ribosomal subunit protein uL10 (319 aa).

Residues 289-319 (EQKSAAPAAKEEAPKEDSEESDEDMGFGLFD) are disordered.

Belongs to the universal ribosomal protein uL10 family. As to quaternary structure, P0 forms a pentameric complex by interaction with dimers of P1 and P2. Phosphorylated.

It localises to the nucleus. It is found in the cytoplasm. In terms of biological role, ribosomal protein P0 is the functional equivalent of E.coli protein L10. This is Large ribosomal subunit protein uL10 (rplp0) from Danio rerio (Zebrafish).